Reading from the N-terminus, the 704-residue chain is Elongation factor G (704 aa).

In terms of domain architecture, tr-type G spans 8–291 (DRVRNIGIMA…AVIEYLASPV (284 aa)). GTP is bound by residues 17-24 (AHIDAGKT), 90-94 (DTPGH), and 144-147 (NKMD).

Belongs to the TRAFAC class translation factor GTPase superfamily. Classic translation factor GTPase family. EF-G/EF-2 subfamily.

It localises to the cytoplasm. Catalyzes the GTP-dependent ribosomal translocation step during translation elongation. During this step, the ribosome changes from the pre-translocational (PRE) to the post-translocational (POST) state as the newly formed A-site-bound peptidyl-tRNA and P-site-bound deacylated tRNA move to the P and E sites, respectively. Catalyzes the coordinated movement of the two tRNA molecules, the mRNA and conformational changes in the ribosome. In Chlorobium chlorochromatii (strain CaD3), this protein is Elongation factor G.